Reading from the N-terminus, the 421-residue chain is Tyrosine--tRNA ligase 1 (421 aa).

Tyr-35 contributes to the L-tyrosine binding site. Positions 40–49 (PTADSLHIGH) match the 'HIGH' region motif. The L-tyrosine site is built by Tyr-170 and Gln-174. The short motif at 231–235 (KFGKT) is the 'KMSKS' region element. Lys-234 provides a ligand contact to ATP. One can recognise an S4 RNA-binding domain in the interval 354–420 (LPLVEILVQS…GKKKYFLLTY (67 aa)).

It belongs to the class-I aminoacyl-tRNA synthetase family. TyrS type 1 subfamily. As to quaternary structure, homodimer.

It is found in the cytoplasm. It carries out the reaction tRNA(Tyr) + L-tyrosine + ATP = L-tyrosyl-tRNA(Tyr) + AMP + diphosphate + H(+). Its function is as follows. Catalyzes the attachment of tyrosine to tRNA(Tyr) in a two-step reaction: tyrosine is first activated by ATP to form Tyr-AMP and then transferred to the acceptor end of tRNA(Tyr). The chain is Tyrosine--tRNA ligase 1 from Bacillus licheniformis (strain ATCC 14580 / DSM 13 / JCM 2505 / CCUG 7422 / NBRC 12200 / NCIMB 9375 / NCTC 10341 / NRRL NRS-1264 / Gibson 46).